The chain runs to 255 residues: uncharacterized protein (255 aa).

The region spanning 3–58 (PVERRQIILEMVAEKGIVSIAELTDRMNVSHMTIRRDLQKLEQQGAVVLVSGGVQS) is the HTH deoR-type domain. Residues 20–39 (VSIAELTDRMNVSHMTIRRD) constitute a DNA-binding region (H-T-H motif).

This is an uncharacterized protein from Escherichia coli (strain K12).